We begin with the raw amino-acid sequence, 376 residues long: Arsenite methyltransferase (376 aa).

Phosphoserine is present on residues Ser47 and Ser336. Basic and acidic residues predominate over residues 354–363; that stretch reads SDKMKPRHAP. The disordered stretch occupies residues 354 to 376; sequence SDKMKPRHAPEGTGGCCGKRKNC.

It belongs to the methyltransferase superfamily. Arsenite methyltransferase family.

It is found in the cytoplasm. The protein localises to the cytosol. The enzyme catalyses arsenic triglutathione + [thioredoxin]-dithiol + S-adenosyl-L-methionine + 2 H2O = methylarsonous acid + [thioredoxin]-disulfide + 3 glutathione + S-adenosyl-L-homocysteine + H(+). It catalyses the reaction arsenic triglutathione + 2 [thioredoxin]-dithiol + 2 S-adenosyl-L-methionine + H2O = dimethylarsinous acid + 2 [thioredoxin]-disulfide + 3 glutathione + 2 S-adenosyl-L-homocysteine + 2 H(+). It carries out the reaction arsenic triglutathione + 3 [thioredoxin]-dithiol + 3 S-adenosyl-L-methionine = trimethylarsine + 3 [thioredoxin]-disulfide + 3 glutathione + 3 S-adenosyl-L-homocysteine + 3 H(+). Functionally, catalyzes the transfer of a methyl group from AdoMet to trivalent arsenicals producing methylated and dimethylated arsenicals. It methylates arsenite to form methylarsonate, Me-AsO(3)H(2), which is reduced by methylarsonate reductase to methylarsonite, Me-As(OH)2. Methylarsonite is also a substrate and it is converted into the much less toxic compound dimethylarsinate (cacodylate), Me(2)As(O)-OH. The sequence is that of Arsenite methyltransferase (As3mt) from Mus musculus (Mouse).